Here is a 441-residue protein sequence, read N- to C-terminus: MLLNISSSPISHRIPHFLSDFNNPTSNFPPKSKTHLPKSNLSTLSNHSLYGTKNRAFYKNKRNPYNRTQALGRFDFGSLESVLEASAVLTAIIVVHETGHFLAASLQGIRVSKFAIGFGPILAKFNSNNVEYSLRAFPLGGFVGFPDNDPDSDIPVDDRNLLKNRPILDRVIVVSAGIVANVIFAYAIIFTQVVSVGLPVQESFPGVLVPDVKSFSAASRDGLLPGDVILAVDGTELSNSGSDSVSKVVDVVKRNPEHNVLLRIERGKESFEIRITPDKSFDGTGKIGVQLSPNVRFGKVRPKNIPETFSFAGREFFGLSYNVLDSLKQTFLNFSQTASKVAGPVAIIAVGAEVARSNADGLYQFAALLNLNLAVINLLPLPALDGGTLALILLEAVRGGRKLPLEVEQGIMSSGIMLVLFLGLFLIVKDTLNLDFIKEML.

A chloroplast-targeting transit peptide spans 1–84 (MLLNISSSPI…DFGSLESVLE (84 aa)). His-96 provides a ligand contact to Zn(2+). Glu-97 is a catalytic residue. His-100 serves as a coordination point for Zn(2+). A helical membrane pass occupies residues 171–191 (VIVVSAGIVANVIFAYAIIFT). Positions 196-249 (VGLPVQESFPGVLVPDVKSFSAASRDGLLPGDVILAVDGTELSNSGSDSVSKVV) constitute a PDZ domain. 2 consecutive transmembrane segments (helical) span residues 373 to 393 (LAVI…ALIL) and 407 to 427 (VEQG…LFLI).

This sequence belongs to the peptidase M50A family. It depends on Zn(2+) as a cofactor.

It is found in the plastid. The protein localises to the chloroplast inner membrane. Its function is as follows. Metalloprotease essential for chloroplast and plant development. May be involved in regulated intramembrane proteolysis (RIP). The chain is Probable membrane metalloprotease ARASP2, chloroplastic from Arabidopsis thaliana (Mouse-ear cress).